A 386-amino-acid polypeptide reads, in one-letter code: Putrescine N-methyltransferase 4 (386 aa).

3 stretches are compositionally biased toward polar residues: residues 1 to 14, 23 to 48, and 57 to 87; these read MEVI…STIF, GHQS…GHHN, and HQNG…NGNE. The disordered stretch occupies residues 1–87; it reads MEVISTNTNG…GTISHDNGNE (87 aa). A PABS domain is found at 97–334; that stretch reads LGWFSEFSAL…GVIGYMLCST (238 aa). Residues glutamine 128, glutamate 203, and 234 to 235 each bind S-adenosyl-L-methionine; that span reads DG. The active-site Proton acceptor is aspartate 253. Residue tyrosine 322 participates in S-adenosyl-L-methionine binding.

Belongs to the class I-like SAM-binding methyltransferase superfamily. Putrescine methyltransferase family. In terms of tissue distribution, predominantly expressed in roots.

The catalysed reaction is putrescine + S-adenosyl-L-methionine = N-methylputrescine + S-adenosyl-L-homocysteine + H(+). It functions in the pathway alkaloid biosynthesis; nicotine biosynthesis. Involved in the biosynthesis of pyridine alkaloid natural products, leading mainly to the production of anabasine, anatabine, nicotine and nornicotine, effective deterrents against herbivores with antiparasitic and pesticide properties (neurotoxins); nornicotine serves as the precursor in the synthesis of the carcinogen compound N'-nitrosonornicotine (NNN). Methyltransferase that mediates the conversion of putrescine to N-methylputrescine. Promotes leaves ripening. This is Putrescine N-methyltransferase 4 from Nicotiana tabacum (Common tobacco).